Consider the following 153-residue polypeptide: Ribosome maturation factor RimP (153 aa).

Belongs to the RimP family.

The protein localises to the cytoplasm. Required for maturation of 30S ribosomal subunits. This chain is Ribosome maturation factor RimP, found in Pelotomaculum thermopropionicum (strain DSM 13744 / JCM 10971 / SI).